The following is a 124-amino-acid chain: Large ribosomal subunit protein bL12 (124 aa).

This sequence belongs to the bacterial ribosomal protein bL12 family. As to quaternary structure, homodimer. Part of the ribosomal stalk of the 50S ribosomal subunit. Forms a multimeric L10(L12)X complex, where L10 forms an elongated spine to which 2 to 4 L12 dimers bind in a sequential fashion. Binds GTP-bound translation factors.

Its function is as follows. Forms part of the ribosomal stalk which helps the ribosome interact with GTP-bound translation factors. Is thus essential for accurate translation. This is Large ribosomal subunit protein bL12 from Aromatoleum aromaticum (strain DSM 19018 / LMG 30748 / EbN1) (Azoarcus sp. (strain EbN1)).